The chain runs to 595 residues: MSKVAKYRRQVSEDPDIDSLLSTLSPEEMEELEKELDVVDPDGSIPVGLRQRNQTDKQPSGSFNREAMLNFCEKESKKLIQREMSVDESKQVGRKTDAKNGEEKDSDASRKAPGPRQDSDLGKEPKKGVLKKSFSRDREEADGRGGEKPKEEKVIRGIDKGRVRAAVDRKESGKDGREERAAAARKEEEKTGSVKNAGLSRDKDKKKEEVKEPSKKEEVKLTAESRNTVGRREDGRLKESSKENKKPEDEGIGSGGRDWRKEDEKVKKEENQPDKEVREESKTKAPEKQAPSCPNKPSDGQARAEEEAAPSIFDEPLEKVKNNDPEMTEVNVNNSDCITNEILVRFTEALEFNTVVKVFALANTRADDHVAFAIAIMLKANKTITSLNLDSNHITGKGILAIFRALLQNNTLTELRFHNQRHICGVKTEMEIAKLLKENTTLLKLGYHFELAGPRMTVTNLLSRNMDKQRQKRLQEQKQAQEASGEKKDRLEVPKVGALAKGSPKPSPQPSPKPAPKNSPKKAGVPAAPPPPPPPLAPPLIMENLKNSLSPATQRKMGDKVLPAQEKNSRDQLLAAIRSSNLKQLKKVEVPKLLQ.

Disordered stretches follow at residues 1–69 (MSKV…EAML), 81–322 (QREM…KVKN), and 467–568 (DKQR…QEKN). Ser-12 is subject to Phosphoserine. Acidic residues predominate over residues 27–40 (EEMEELEKELDVVD). Composition is skewed to basic and acidic residues over residues 81 to 110 (QREM…DASR), 117 to 127 (QDSDLGKEPKK), 134 to 192 (FSRD…EKTG), 200 to 223 (SRDK…KLTA), 230 to 249 (GRRE…KPED), 257 to 287 (RDWR…KAPE), 467 to 476 (DKQRQKRLQE), and 484 to 493 (SGEKKDRLEV). Ser-85 is modified (phosphoserine). Ser-135 bears the Phosphoserine mark. 8 consecutive repeat copies span residues 165–179 (AAVD…GREE), 180–195 (RAAA…GSVK), 196–211 (NAGL…EEVK), 212–226 (EPSK…AESR), 227–240 (NTVG…LKES), 242–255 (KENK…IGSG), 256–271 (GRDW…KEEN), and 272–288 (QPDK…APEK). The 8 X approximate tandem repeats stretch occupies residues 165–288 (AAVDRKESGK…EESKTKAPEK (124 aa)). Positions 503–522 (SPKPSPQPSPKPAPKNSPKK) are 5 X 4 AA approximate tandem repeats. 2 stretches are compositionally biased toward pro residues: residues 505–517 (KPSP…PAPK) and 527–538 (AAPPPPPPPLAP). Ser-550 carries the post-translational modification Phosphoserine. In terms of domain architecture, WH2 spans 569–588 (SRDQLLAAIRSSNLKQLKKV).

Belongs to the tropomodulin family. In terms of tissue distribution, detected in aorta, urinary bladder and uterus (at protein level). Detected in smooth muscle cells. Detected in aorta, bladder, colon, intestine, stomach and uterus.

Its subcellular location is the cytoplasm. It is found in the myofibril. It localises to the sarcomere. The protein resides in the cytoskeleton. In terms of biological role, required for proper contractility of visceral smooth muscle cells. Mediates nucleation of actin filaments. In Mus musculus (Mouse), this protein is Leiomodin-1 (Lmod1).